A 227-amino-acid chain; its full sequence is Cytochrome c oxidase subunit 2 (227 aa).

Residues 1–14 lie on the Mitochondrial intermembrane side of the membrane; the sequence is MAYPMQLGLQDATS. The helical transmembrane segment at 15–45 threads the bilayer; that stretch reads PIMEELTDFHDHTLMIVFLISTLVLYIISMM. The Mitochondrial matrix portion of the chain corresponds to 46 to 59; sequence LTTKLTHTSTMDAQ. The chain crosses the membrane as a helical span at residues 60 to 87; the sequence is EVETIWTVLPAVILVMIALPSLRILYMM. Residues 88 to 227 lie on the Mitochondrial intermembrane side of the membrane; the sequence is DEINDPYLTV…QFESWASSMT (140 aa). The Cu cation site is built by H161, C196, E198, C200, H204, and M207. Residue E198 coordinates Mg(2+).

Belongs to the cytochrome c oxidase subunit 2 family. In terms of assembly, component of the cytochrome c oxidase (complex IV, CIV), a multisubunit enzyme composed of 14 subunits. The complex is composed of a catalytic core of 3 subunits MT-CO1, MT-CO2 and MT-CO3, encoded in the mitochondrial DNA, and 11 supernumerary subunits COX4I, COX5A, COX5B, COX6A, COX6B, COX6C, COX7A, COX7B, COX7C, COX8 and NDUFA4, which are encoded in the nuclear genome. The complex exists as a monomer or a dimer and forms supercomplexes (SCs) in the inner mitochondrial membrane with NADH-ubiquinone oxidoreductase (complex I, CI) and ubiquinol-cytochrome c oxidoreductase (cytochrome b-c1 complex, complex III, CIII), resulting in different assemblies (supercomplex SCI(1)III(2)IV(1) and megacomplex MCI(2)III(2)IV(2)). Found in a complex with TMEM177, COA6, COX18, COX20, SCO1 and SCO2. Interacts with TMEM177 in a COX20-dependent manner. Interacts with COX20. Interacts with COX16. It depends on Cu cation as a cofactor.

It is found in the mitochondrion inner membrane. It catalyses the reaction 4 Fe(II)-[cytochrome c] + O2 + 8 H(+)(in) = 4 Fe(III)-[cytochrome c] + 2 H2O + 4 H(+)(out). Functionally, component of the cytochrome c oxidase, the last enzyme in the mitochondrial electron transport chain which drives oxidative phosphorylation. The respiratory chain contains 3 multisubunit complexes succinate dehydrogenase (complex II, CII), ubiquinol-cytochrome c oxidoreductase (cytochrome b-c1 complex, complex III, CIII) and cytochrome c oxidase (complex IV, CIV), that cooperate to transfer electrons derived from NADH and succinate to molecular oxygen, creating an electrochemical gradient over the inner membrane that drives transmembrane transport and the ATP synthase. Cytochrome c oxidase is the component of the respiratory chain that catalyzes the reduction of oxygen to water. Electrons originating from reduced cytochrome c in the intermembrane space (IMS) are transferred via the dinuclear copper A center (CU(A)) of subunit 2 and heme A of subunit 1 to the active site in subunit 1, a binuclear center (BNC) formed by heme A3 and copper B (CU(B)). The BNC reduces molecular oxygen to 2 water molecules using 4 electrons from cytochrome c in the IMS and 4 protons from the mitochondrial matrix. The polypeptide is Cytochrome c oxidase subunit 2 (MT-CO2) (Cratogeomys bursarius (Plains pocket gopher)).